The chain runs to 101 residues: Small ribosomal subunit protein uS14A (101 aa).

The disordered stretch occupies residues 31–73; that stretch reads IKSPSTTPEARVAAQSELNRQPRDASPVRVRNRDSVDGRPRGH. A compositionally biased stretch (basic and acidic residues) spans 61 to 70; the sequence is RNRDSVDGRP.

Belongs to the universal ribosomal protein uS14 family. In terms of assembly, part of the 30S ribosomal subunit. Contacts proteins S3 and S10.

Binds 16S rRNA, required for the assembly of 30S particles and may also be responsible for determining the conformation of the 16S rRNA at the A site. This chain is Small ribosomal subunit protein uS14A, found in Mycolicibacterium vanbaalenii (strain DSM 7251 / JCM 13017 / BCRC 16820 / KCTC 9966 / NRRL B-24157 / PYR-1) (Mycobacterium vanbaalenii).